The following is a 154-amino-acid chain: Prefoldin subunit alpha (154 aa).

Residues 119 to 154 (EKAEVETEMEELEQQAQQMQQQQMQQMMQQQEQEDE) form a disordered region. Positions 132–154 (QQAQQMQQQQMQQMMQQQEQEDE) are enriched in low complexity.

The protein belongs to the prefoldin subunit alpha family. In terms of assembly, heterohexamer of two alpha and four beta subunits.

It localises to the cytoplasm. Functionally, molecular chaperone capable of stabilizing a range of proteins. Seems to fulfill an ATP-independent, HSP70-like function in archaeal de novo protein folding. In Haloarcula marismortui (strain ATCC 43049 / DSM 3752 / JCM 8966 / VKM B-1809) (Halobacterium marismortui), this protein is Prefoldin subunit alpha.